Reading from the N-terminus, the 579-residue chain is Glucose starvation modulator protein 1 (579 aa).

A DNA-binding region (zn(2)-C6 fungal-type) is located at residues Cys20–Cys48. Positions Gly43–Arg53 are enriched in basic and acidic residues. 2 disordered regions span residues Gly43–Ser75 and Gln319–Val342. Residues Lys54 to Lys64 are compositionally biased toward basic residues. Residues Asn330–Gly339 are compositionally biased toward polar residues. The region spanning Leu444–Gly516 is the PAS domain.

This sequence belongs to the ERT1/acuK family.

The protein resides in the nucleus. In terms of biological role, transcription factor which regulates nonfermentable carbon utilization. The protein is Glucose starvation modulator protein 1 (GSM1) of Kluyveromyces lactis (strain ATCC 8585 / CBS 2359 / DSM 70799 / NBRC 1267 / NRRL Y-1140 / WM37) (Yeast).